Here is a 242-residue protein sequence, read N- to C-terminus: Probable transcriptional regulatory protein PG_0097 (242 aa).

The protein belongs to the TACO1 family.

Its subcellular location is the cytoplasm. This is Probable transcriptional regulatory protein PG_0097 from Porphyromonas gingivalis (strain ATCC BAA-308 / W83).